We begin with the raw amino-acid sequence, 246 residues long: tRNA (guanine-N(7)-)-methyltransferase (246 aa).

The segment at 1 to 23 (MIESSSPTPPALHEGAPADVSHP) is disordered. S-adenosyl-L-methionine contacts are provided by glutamate 75, glutamate 100, aspartate 127, and aspartate 150. The active site involves aspartate 150. Lysine 154 serves as a coordination point for substrate. The tract at residues 156–161 (KHNKRR) is interaction with RNA. Substrate-binding positions include aspartate 186 and 225–228 (TKFE).

Belongs to the class I-like SAM-binding methyltransferase superfamily. TrmB family.

The enzyme catalyses guanosine(46) in tRNA + S-adenosyl-L-methionine = N(7)-methylguanosine(46) in tRNA + S-adenosyl-L-homocysteine. The protein operates within tRNA modification; N(7)-methylguanine-tRNA biosynthesis. Its function is as follows. Catalyzes the formation of N(7)-methylguanine at position 46 (m7G46) in tRNA. The sequence is that of tRNA (guanine-N(7)-)-methyltransferase from Polaromonas naphthalenivorans (strain CJ2).